A 202-amino-acid polypeptide reads, in one-letter code: Endothelin-1 (202 aa).

Residues 1–25 (MDYFPMIFALLFVAFQGAPEAAVLG) form the signal peptide. Positions 26–50 (TELSTGAESGGERPVPTTPWRPRRS) are excised as a propeptide. The segment at 29-48 (STGAESGGERPVPTTPWRPR) is disordered. 2 disulfide bridges follow: cysteine 53–cysteine 67 and cysteine 55–cysteine 63. Positions 74–202 (VNTPEHVVPY…DKKVIYSRAH (129 aa)) are excised as a propeptide. Positions 110 to 124 (CQCASQTDKKCQNFC) are endothelin-like.

The protein belongs to the endothelin/sarafotoxin family.

The protein localises to the secreted. Endothelins are endothelium-derived vasoconstrictor peptides. Probable ligand for G-protein coupled receptors EDNRA and EDNRB which activates PTK2B, BCAR1, BCAR3 and, GTPases RAP1 and RHOA cascade in glomerular mesangial cells. Also binds the DEAR/FBXW7-AS1 receptor. Promotes mesenteric arterial wall remodeling via activation of ROCK signaling and subsequent colocalization of NFATC3 with F-actin filaments. NFATC3 then translocates to the nucleus where it subsequently promotes the transcription of the smooth muscle hypertrophy and differentiation marker ACTA2. The chain is Endothelin-1 (EDN1) from Ovis aries (Sheep).